A 994-amino-acid chain; its full sequence is Sarcoplasmic/endoplasmic reticulum calcium ATPase 1 (994 aa).

Residues 1-48 (MEQAHTKTTEECLAYFGVNENTGLSLDQVKKNFDKFGPNELPAEEGKS) are Cytoplasmic-facing. The chain crosses the membrane as a helical span at residues 49 to 69 (LWELVAEQFEDLLVRILLLAA). The Lumenal portion of the chain corresponds to 70–89 (IISFVLAWFEEGEETVTAFV). Residues 90-110 (EPFVILLILIANAVVGVWQER) traverse the membrane as a helical segment. The Cytoplasmic segment spans residues 111-253 (NAEDAIEALK…QEKTPLQQKL (143 aa)). A helical transmembrane segment spans residues 254–273 (DEFGEQLSKVISLICVAVWL). The Lumenal segment spans residues 274–295 (INIGHFNDPIHGGSWIKGAIYY). Residues 296–313 (FKIAVALAVAAIPEGLPA) traverse the membrane as a helical segment. Residues V304, A305, I307, and E309 each coordinate Ca(2+). Residues 314-757 (VITTCLALGT…EEGRAIYNNM (444 aa)) are Cytoplasmic-facing. The active-site 4-aspartylphosphate intermediate is D351. 2 residues coordinate Mg(2+): D351 and T353. ATP is bound by residues T353, E442, R489, K515, R560, T625, G626, D627, R678, and K684. D703 is a binding site for Mg(2+). N706 serves as a coordination point for ATP. The chain crosses the membrane as a helical span at residues 758–777 (KQFIRYLISSNVGEVVCIFL). The Ca(2+) site is built by N768 and E771. The Lumenal segment spans residues 778–787 (TAALGLPEAL). The chain crosses the membrane as a helical span at residues 788–808 (IPVQLLWVNLVTDGLPATALG). Residues 788-808 (IPVQLLWVNLVTDGLPATALG) form an interaction with PLN region. Positions 796, 799, and 800 each coordinate Ca(2+). Residues 809 to 828 (FNPPDLDIMDRPPRSPKEPL) are Cytoplasmic-facing. A helical membrane pass occupies residues 829 to 851 (ISGWLFFRYMAIGGYVGAATVGA). Topologically, residues 852–897 (AAWWFMYADDGPNVTFYQLSHFMQCTEDNPDFEGHECEIFESPVPM) are lumenal. The cysteines at positions 876 and 888 are disulfide-linked. A helical transmembrane segment spans residues 898-917 (TMALSVLVTIEMCNALNSLS). E908 lines the Ca(2+) pocket. The Cytoplasmic segment spans residues 918-930 (ENQSLIRMPPWSN). A helical transmembrane segment spans residues 931-949 (FWLLGSICLSMSLHFLILY). An interaction with PLN region spans residues 932–943 (WLLGSICLSMSL). The Lumenal portion of the chain corresponds to 950 to 964 (VEPLPMIFKLTPLNV). The helical transmembrane segment at 965 to 985 (EQWFIVLKMSFPVILLDELLK) threads the bilayer. Residues 986–994 (FVARNYLEG) are Cytoplasmic-facing.

It belongs to the cation transport ATPase (P-type) (TC 3.A.3) family. Type IIA subfamily. In terms of assembly, interacts with sarcolipin (SLN). Interacts with phospholamban (PLN). Interacts with myoregulin (MRLN). Interacts with DWORF. Interacts with VMP1. The cofactor is Mg(2+).

It is found in the endoplasmic reticulum membrane. The protein resides in the sarcoplasmic reticulum membrane. It carries out the reaction Ca(2+)(in) + ATP + H2O = Ca(2+)(out) + ADP + phosphate + H(+). With respect to regulation, inhibited by sarcolipin (SLN) and myoregulin (MRLN). Also shown to be inhibited by phospholamban (PLN) in vitro. Enhanced by DWORF; DWORF increases activity by displacing sarcolipin (SLN), phospholamban (PLN) and myoregulin (MRLN). Functionally, key regulator of striated muscle performance by acting as the major Ca(2+) ATPase responsible for the reuptake of cytosolic Ca(2+) into the sarcoplasmic reticulum. Catalyzes the hydrolysis of ATP coupled with the translocation of calcium from the cytosol to the sarcoplasmic reticulum lumen. Contributes to calcium sequestration involved in muscular excitation/contraction. In Pelophylax lessonae (Pool frog), this protein is Sarcoplasmic/endoplasmic reticulum calcium ATPase 1 (ATP2A1).